The following is a 381-amino-acid chain: Protein RecA (381 aa).

79–86 contributes to the ATP binding site; it reads GPESSGKT.

The protein belongs to the RecA family.

The protein localises to the cytoplasm. Can catalyze the hydrolysis of ATP in the presence of single-stranded DNA, the ATP-dependent uptake of single-stranded DNA by duplex DNA, and the ATP-dependent hybridization of homologous single-stranded DNAs. It interacts with LexA causing its activation and leading to its autocatalytic cleavage. The polypeptide is Protein RecA (Streptococcus parasanguinis).